We begin with the raw amino-acid sequence, 338 residues long: P2Y purinoceptor 14 (338 aa).

Residues 1 to 29 (MNNSTTTDPPNQPCSWNTLITKQIIPVLY) lie on the Extracellular side of the membrane. 2 N-linked (GlcNAc...) asparagine glycosylation sites follow: Asn-2 and Asn-3. The helical transmembrane segment at 30–50 (GMVFITGLLLNGISGWIFFYV) threads the bilayer. Topologically, residues 51–55 (PSSKS) are cytoplasmic. Residues 56–76 (FIIYLKNIVVADFLMGLTFPF) form a helical membrane-spanning segment. Over 77–96 (KVLGDSGLGPWQVNVFVCRV) the chain is Extracellular. A disulfide bridge links Cys-94 with Cys-172. Residues 97 to 117 (SAVIFYVNMYVSIVFFGLISF) traverse the membrane as a helical segment. The Cytoplasmic segment spans residues 118 to 139 (DRYYKIVKPLLTSIVQSVNYSK). Residues 140–160 (LLSVLVWMLMLLLAVPNIILT) form a helical membrane-spanning segment. The Extracellular portion of the chain corresponds to 161 to 188 (NQGVKEVTKIQCMELKNELGRKWHKASN). Residues 189 to 209 (YIFVSIFWVVFLLLIVFYTAI) form a helical membrane-spanning segment. Topologically, residues 210 to 234 (TRKIFKSHLKSRKNSTSVKRKSSRN) are cytoplasmic. A helical transmembrane segment spans residues 235–255 (IFSIVLVFVVCFVPYHIARIP). At 256 to 278 (YTKSQTEGHYSCRTKETLLYAKE) the chain is on the extracellular side. A helical transmembrane segment spans residues 279 to 299 (FTLLLSAANVCLDPIIYFFLC). Residues 300–338 (QPFREVLNKKLHMSLKVQNDLEVSKTKRENAIHESTDTL) are Cytoplasmic-facing.

The protein belongs to the G-protein coupled receptor 1 family.

It localises to the cell membrane. Functionally, receptor for UDP-glucose coupled to G-proteins. This is P2Y purinoceptor 14 (P2ry14) from Mus musculus (Mouse).